The sequence spans 266 residues: ATP synthase subunit a (266 aa).

Transmembrane regions (helical) follow at residues 38–58 (KQML…VLAA), 99–119 (LLFS…IPLI), 126–146 (HVGG…AIGI), 162–182 (GVPW…NFVV), 191–211 (LFAT…GIEY), and 224–244 (SVLV…IMVL).

It belongs to the ATPase A chain family. F-type ATPases have 2 components, CF(1) - the catalytic core - and CF(0) - the membrane proton channel. CF(1) has five subunits: alpha(3), beta(3), gamma(1), delta(1), epsilon(1). CF(0) has three main subunits: a(1), b(2) and c(9-12). The alpha and beta chains form an alternating ring which encloses part of the gamma chain. CF(1) is attached to CF(0) by a central stalk formed by the gamma and epsilon chains, while a peripheral stalk is formed by the delta and b chains.

The protein localises to the cell membrane. Functionally, key component of the proton channel; it plays a direct role in the translocation of protons across the membrane. The sequence is that of ATP synthase subunit a from Pseudarthrobacter chlorophenolicus (strain ATCC 700700 / DSM 12829 / CIP 107037 / JCM 12360 / KCTC 9906 / NCIMB 13794 / A6) (Arthrobacter chlorophenolicus).